Here is a 166-residue protein sequence, read N- to C-terminus: P2Y purinoceptor 2 (166 aa).

Over 1–24 (VHRCLGVLRPLHSLRWGRARYARR) the chain is Cytoplasmic. The chain crosses the membrane as a helical span at residues 25-45 (VAAVVWVLVLACQAPVLYFVT). Topologically, residues 46 to 72 (TSVRGTRITCHDTSARELFSHFVAYSS) are extracellular. A helical transmembrane segment spans residues 73–93 (VMLSLLFAVPFSVILVCYVLM). At 94–115 (ARRLLKPAYGTTGGLPRAKRKS) the chain is on the cytoplasmic side. The chain crosses the membrane as a helical span at residues 116-136 (VRTIALVLAVFTLCFLPFHVT). Over 137-159 (RTLYYSFRSLDLSCHTLNAINMA) the chain is Extracellular. Residues 160–166 (YKITRPL) traverse the membrane as a helical segment.

This sequence belongs to the G-protein coupled receptor 1 family.

Its subcellular location is the cell membrane. Receptor for ATP and UTP coupled to G-proteins that activate a phosphatidylinositol-calcium second messenger system. This Cricetulus griseus (Chinese hamster) protein is P2Y purinoceptor 2 (P2RY2).